Reading from the N-terminus, the 209-residue chain is PRA1 family protein B1 (209 aa).

N-acetylalanine is present on A2. A run of 5 helical transmembrane segments spans residues 73 to 93, 95 to 115, 133 to 153, 154 to 174, and 185 to 205; these read LAYFKVNYVAIVSLVLAFSLF, HPLSLLVLIGLLGGWMFLYLF, ETLLALVLSTIVVVFMTSVGS, LLTSALMIGVAIVCVHGAFVV, and PANAGLLSFLGGSATSAAAAV.

It belongs to the PRA1 family. In terms of assembly, can form homodimer. Interacts with PRA1B2, PRA1B3, PRA1B4, PRA1B5, PRA1B6 and PRA1E.

The protein localises to the endosome membrane. May be involved in both secretory and endocytic intracellular trafficking in the endosomal/prevacuolar compartments. The protein is PRA1 family protein B1 (PRA1B1) of Arabidopsis thaliana (Mouse-ear cress).